The primary structure comprises 544 residues: Chaperonin GroEL (544 aa).

ATP-binding positions include 29–32 (TLGP), 86–90 (DGTTT), Gly413, 476–478 (NAA), and Asp492. Positions 522–544 (PDPNANNNAAAGANPAAGMGGMM) are disordered. Residues 524–538 (PNANNNAAAGANPAA) are compositionally biased toward low complexity.

Belongs to the chaperonin (HSP60) family. As to quaternary structure, forms a cylinder of 14 subunits composed of two heptameric rings stacked back-to-back. Interacts with the co-chaperonin GroES.

The protein resides in the cytoplasm. It carries out the reaction ATP + H2O + a folded polypeptide = ADP + phosphate + an unfolded polypeptide.. In terms of biological role, together with its co-chaperonin GroES, plays an essential role in assisting protein folding. The GroEL-GroES system forms a nano-cage that allows encapsulation of the non-native substrate proteins and provides a physical environment optimized to promote and accelerate protein folding. The protein is Chaperonin GroEL of Lacticaseibacillus casei (strain BL23) (Lactobacillus casei).